Here is a 165-residue protein sequence, read N- to C-terminus: Histone H1-like protein HC2 (165 aa).

Basic residues-rich tracts occupy residues 1–50 (MLGV…KTVA) and 59–80 (PVAK…KKTV). The segment at 1 to 80 (MLGVQKKRST…VRKVAAKKTV (80 aa)) is disordered.

This sequence belongs to the histone H1/H5 family. HCT subfamily.

Functionally, might have a role in establishing the nucleoid structure of elementary bodies. This chain is Histone H1-like protein HC2 (hctB), found in Chlamydia trachomatis.